The chain runs to 22 residues: TNTPEQQCYLQAKCYIEFYVVV.

One can recognise a Peptidase M12B domain in the interval 14–22; the sequence is CYIEFYVVV.

It belongs to the venom metalloproteinase (M12B) family. P-III subfamily. P-IIId sub-subfamily. In terms of assembly, heterotrimer; disulfide-linked. The heterotrimer consists of 1 metalloproteinase chain and 2 lectin chains. Zn(2+) is required as a cofactor. In terms of processing, N-glycosylated. As to expression, expressed by the venom gland.

The protein localises to the secreted. Functionally, snake venom metalloproteinase that inhibits the classical complement pathway dose-dependently. It acts by binding to carbohydrates of IgG within the antibody-sensitized sheep erythrocytes (EA) complex, and thus prevents interaction of component C2 with immobilized C4b. Also induces cation-independent hemagglutination that can be prevented by D-galactose pretreatment. In Naja oxiana (Central Asian cobra), this protein is Zinc metalloproteinase oxiagin.